A 166-amino-acid chain; its full sequence is Large ribosomal subunit protein bL19 (166 aa).

It belongs to the bacterial ribosomal protein bL19 family.

In terms of biological role, this protein is located at the 30S-50S ribosomal subunit interface and may play a role in the structure and function of the aminoacyl-tRNA binding site. The sequence is that of Large ribosomal subunit protein bL19 from Chelativorans sp. (strain BNC1).